Reading from the N-terminus, the 259-residue chain is Polycomb group RING finger protein 1 (259 aa).

Residues 45–84 (CYLCAGYFIDATTITECLHTFCKSCIVKYLQTSKYCPLCN) form an RING-type zinc finger.

As to quaternary structure, component of a PRC1-like complex.

The protein resides in the nucleus. In terms of biological role, component of a Polycomb group (PcG) multiprotein PRC1-like complex, a complex class required to maintain the transcriptionally repressive state of many genes, including Hox genes, throughout development. PcG PRC1 complex acts via chromatin remodeling and modification of histones; it mediates monoubiquitination of histone H2A 'Lys-119', rendering chromatin heritably changed in its expressibility. This is Polycomb group RING finger protein 1 (pcgf1) from Xenopus tropicalis (Western clawed frog).